Reading from the N-terminus, the 151-residue chain is Deoxyuridine 5'-triphosphate nucleotidohydrolase (151 aa).

Substrate is bound by residues 70–72 (RSG), Asn-83, 87–89 (LID), and Met-97.

The protein belongs to the dUTPase family. Homotrimer. It depends on Mg(2+) as a cofactor.

The catalysed reaction is dUTP + H2O = dUMP + diphosphate + H(+). Its pathway is pyrimidine metabolism; dUMP biosynthesis; dUMP from dCTP (dUTP route): step 2/2. This enzyme is involved in nucleotide metabolism: it produces dUMP, the immediate precursor of thymidine nucleotides and it decreases the intracellular concentration of dUTP so that uracil cannot be incorporated into DNA. In Escherichia fergusonii (strain ATCC 35469 / DSM 13698 / CCUG 18766 / IAM 14443 / JCM 21226 / LMG 7866 / NBRC 102419 / NCTC 12128 / CDC 0568-73), this protein is Deoxyuridine 5'-triphosphate nucleotidohydrolase.